The following is an 892-amino-acid chain: Putative VWFA domain-containing protein ORF892 (892 aa).

The tract at residues 109 to 548 (EEQLQRRPQR…RGYAHGDEDL (440 aa)) is disordered. A compositionally biased stretch (polar residues) spans 129–142 (SEVANQRVSRSAEN). The segment covering 143–162 (QGKRGNEEKQQQKTPGKTEE) has biased composition (basic and acidic residues). Positions 169-184 (ESGEEGNQQEESGEEQ) are enriched in acidic residues. Positions 185 to 196 (EGVKGSRSKQRE) are enriched in basic and acidic residues. Residues 212 to 223 (ESGESESEEGQS) show a composition bias toward acidic residues. Low complexity-rich tracts occupy residues 224-238 (SEET…GNQQ) and 271-283 (GNGQ…AQNG). The span at 287–300 (GESEGEITESESAS) shows a compositional bias: acidic residues. Residues 301–323 (EEQTGSKGKSGQQGEEGQQQSGS) show a composition bias toward low complexity. 2 stretches are compositionally biased toward acidic residues: residues 324–336 (EGEE…ESGE) and 425–448 (SESE…ETEE). The span at 453-466 (SEAEGTAAEGEVGQ) shows a compositional bias: low complexity. Polar residues-rich tracts occupy residues 467 to 481 (PSEQ…SGQR) and 512 to 531 (QTGS…QQGE). Basic and acidic residues predominate over residues 536-546 (EGGRGYAHGDE). Positions 553–620 (QEINSILQTL…VQKLLKDLNV (68 aa)) form a coiled coil. Residues 723-892 (DFLFVIDSSG…GNIVLKRLVH (170 aa)) enclose the VWFA domain.

This Acidianus two-tailed virus (ATV) protein is Putative VWFA domain-containing protein ORF892.